Here is a 349-residue protein sequence, read N- to C-terminus: Crinkler effector protein 5 (349 aa).

A signal peptide spans 1-17 (MVKLFCSIVGVAGSPFS). Residues 18–57 (VEVNEGKTVDDLKKAIKAENLDDPTLRNVAPKNLQLFLAK) form an LQLFLAK domain region. Positions 58–108 (KGDAWLRYNEDLDTYLQSEIDTSSYLHMRASWKLSKPTLFGPDVSLGEDVV) are DWL domain. An HVLVXXP motif motif is present at residues 109–115 (HVLVVVP).

The protein belongs to the Crinkler effector family.

It is found in the secreted. Its subcellular location is the host nucleus. In terms of biological role, secreted effector that elicits necrosis in host plants, a characteristic of plant innate immunity. The protein is Crinkler effector protein 5 of Phytophthora infestans (Potato late blight agent).